Consider the following 233-residue polypeptide: MGFSFKAFHVDDFGCGMPVSTDAVLLGAWANLDGADAVLDLGAGSGLLALMAAQRCKAPITAIEIDPVAASACRSNFSASPWPDRINLIEADATDAEALAGKVFTHILCNPPYFETGPLSEKPGRAQARHTGSLGFLALCKLITTHLSTEGIASLVLPVESEQAFRQALTHLGLGIRQRVEVSTVEGKAPRRLLLAVSQGEDSYQHEHLAIRDVHGCYTEAMTALTRDFYLKL.

The protein belongs to the methyltransferase superfamily. tRNA (adenine-N(6)-)-methyltransferase family.

It is found in the cytoplasm. It carries out the reaction adenosine(37) in tRNA1(Val) + S-adenosyl-L-methionine = N(6)-methyladenosine(37) in tRNA1(Val) + S-adenosyl-L-homocysteine + H(+). Its function is as follows. Specifically methylates the adenine in position 37 of tRNA(1)(Val) (anticodon cmo5UAC). The chain is tRNA1(Val) (adenine(37)-N6)-methyltransferase from Shewanella amazonensis (strain ATCC BAA-1098 / SB2B).